The primary structure comprises 1220 residues: Protein transport protein Sec31A (1220 aa).

7 WD repeats span residues 4-47 (KEVD…EIFE), 68-111 (RYHK…AGDK), 120-160 (KHTG…TPMT), 166-206 (QPPE…PIIK), 209-254 (DHSN…SPLR), 258-298 (NHAR…VLYE), and 301-342 (TNTQ…DGLR). Residues 161–471 (PGAKTQPPED…IDASQTEFEK (311 aa)) form an interaction with SEC13 region. Residues 397-430 (SFSFGGKLVTFENVRMPSHQGAEQQQQQHHVFIS) form a WD 8; interaction with SEC13 repeat. Residues serine 527 and serine 532 each carry the phosphoserine modification. Lysine 647 participates in a covalent cross-link: Glycyl lysine isopeptide (Lys-Gly) (interchain with G-Cter in ubiquitin). 2 disordered regions span residues 791 to 908 (GEPV…NAYP) and 924 to 1096 (QLYA…GNTF). Serine 799 is modified (phosphoserine). An interaction with PDCD6 region spans residues 800-1113 (PKIPYEKQQL…TKKITKKPIP (314 aa)). Positions 842 to 848 (GFIMHGN) match the ALG-2-binding site motif-2 (ABS-2) motif. A compositionally biased stretch (polar residues) spans 849 to 859 (VNPNAAGQLPT). Residues 869-882 (PPYPQPQPYQPAQP) are compositionally biased toward pro residues. Residues 962 to 972 (PSSSAYALPPG) show a composition bias toward low complexity. Composition is skewed to polar residues over residues 984-995 (PASQRTGPQNGW) and 1031-1053 (PQSQ…SSFP). The residue at position 1161 (threonine 1161) is a Phosphothreonine. The residue at position 1163 (serine 1163) is a Phosphoserine. Residue lysine 1217 forms a Glycyl lysine isopeptide (Lys-Gly) (interchain with G-Cter in ubiquitin) linkage.

The protein belongs to the WD repeat SEC31 family. COPII is composed of at least 5 proteins: the SEC23/24 complex, the SEC13/31 complex and SAR1. SEC13 and SEC31 make a 2:2 tetramer that forms the edge element of the COPII outer coat. The tetramer self-assembles in multiple copies to form the complete polyhedral cage. Interacts (via WD 8) with SEC13. Interacts with PDCD6; interaction takes place in response to cytosolic calcium increase and leads to bridge together the BCR(KLHL12) complex and SEC31A, leading to monoubiquitination. Interacts with KLHL12. In terms of processing, monoubiquitinated by the BCR(KLHL12) E3 ubiquitin ligase complex, leading to regulate the size of COPII coats. In terms of tissue distribution, abundantly and ubiquitously expressed.

The protein resides in the cytoplasm. The protein localises to the cytoplasmic vesicle. It localises to the COPII-coated vesicle membrane. Its subcellular location is the endoplasmic reticulum membrane. It is found in the cytosol. Its function is as follows. Component of the coat protein complex II (COPII) which promotes the formation of transport vesicles from the endoplasmic reticulum (ER). The coat has two main functions, the physical deformation of the endoplasmic reticulum membrane into vesicles and the selection of cargo molecules. The sequence is that of Protein transport protein Sec31A (SEC31A) from Homo sapiens (Human).